The primary structure comprises 504 residues: ATP synthase subunit alpha (504 aa).

169–176 lines the ATP pocket; that stretch reads GDRQTGKT.

The protein belongs to the ATPase alpha/beta chains family. As to quaternary structure, F-type ATPases have 2 components, CF(1) - the catalytic core - and CF(0) - the membrane proton channel. CF(1) has five subunits: alpha(3), beta(3), gamma(1), delta(1), epsilon(1). CF(0) has three main subunits: a(1), b(2) and c(9-12). The alpha and beta chains form an alternating ring which encloses part of the gamma chain. CF(1) is attached to CF(0) by a central stalk formed by the gamma and epsilon chains, while a peripheral stalk is formed by the delta and b chains.

The protein localises to the cell membrane. The catalysed reaction is ATP + H2O + 4 H(+)(in) = ADP + phosphate + 5 H(+)(out). In terms of biological role, produces ATP from ADP in the presence of a proton gradient across the membrane. The alpha chain is a regulatory subunit. In Clostridium kluyveri (strain NBRC 12016), this protein is ATP synthase subunit alpha.